We begin with the raw amino-acid sequence, 1382 residues long: MKAPAVLAPGILVLLFTLVQKSYGECKEALVKSEMNVNMKYQLPNFTAETPIQNVVLHKHHIYLGAVNYIYVLNDKDLQKVAEYKTGPVLEHPDCSPCQDCSHKANLSGGVWEDNINMALLVDTYYDDQLISCGSVHRGTCQRHILPPSNIADIQSEVHCMYSSQADEEPSQCPDCVVSALGTKVLISEKDRFINFFVGNTINSSDHPDHSLHSISVRRLKETQDGFKFLTDQSYIDVLPEFRDSYPIKYVHAFESNHFIYFLTVQRETLDAQTFHTRIIRFCSVDSGLHSYMEMPLECILTEKRRKRSTREEVFNILQAAYVSKPGAHLAKQIGANLNDDILYGVFAQSKPDSAEPMNRSAVCAFPIKYVNEFFNKIVNKNNVRCLQHFYGPNHEHCFNRTLLRNSSGCEARNDEYRTEFTTALQRVDLFMGQFNQVLLTSISTFIKGDLTIANLGTSEGRFMQVVVSRSGLSTPHVNFRLDSHPVSPEAIVEHPLNQNGYTLVVTGKKITRIPLNGLGCEHFQSCSQCLSAPPFVQCGWCHDRCVHLEECPTGAWTQEVCLPAIYEVFPTSAPLEGGTVLTVCGWDFGFRRNNKFDLKKTKVFLGNESCTLTLSESTTNMLKCTVGPAVNEHFNISIIISNGRGTAQYSTFSYVDPIITSISPSYGPKNGGTLLTLTGKYLNSGNSRHISMGGKTCTLKSVSDSILECYTPAQATATEFPIKLKIDLANREMNSFSYQEDPIVYAIHPTKSFISGGSTITAVGKNLNSVSVLRMVIDVHETRRNFTVACQHRSNSEIICCTTPSLQQLNLQLPLKTKAFFMLDGIHSKYFDLIYVHNPVFKPFEKPVMISIGNENVLEIKGNDIDPEAVKGEVLKVGNKSCETIYSDSKAVLCKVPNDLLKLNNELNIEWKQAVSSTVLGKVIVQPDQNFTGLIAGVISISTIVLLLLGLFLWLKRKKQIKDLGSELVRYDARVHTPHLDRLVSARSVSPTTEMVSNESVDYRATFPEDQFPNSSQNGSCRQVQYPLTDLSPMLTSGDSDISSPLLQNTVHIDLSALNPELVQAVQHVVIGPSSLIVHFNEVIGRGHFGCVYHGTLLDNDDKKIHCAVKSLNRITDIGEVSQFLTEGIIMKDFSHPNVLSLLGICLRSEGSPLVVLPYMKHGDLRNFIRNETHNPTVKDLIGFGLQVAKGMKYLASKKFVHRDLAARNCMLDEKFTVKVADFGLARDMYDKEYYSVHNKTGAKLPVKWMALESLQTQKFTTKSDVWSFGVLLWELMTRGAPPYPDVNTFDITVYLLQGRRLLQPEYCPDPLYEVMLKCWHPRAELRPSFSELVSRISAIFSTFIGEHYVHVNATYVNVKCVAPYPSLLSSQDNIDGEGDT.

The N-terminal stretch at 1 to 24 (MKAPAVLAPGILVLLFTLVQKSYG) is a signal peptide. Over 25 to 935 (ECKEALVKSE…VQPDQNFTGL (911 aa)) the chain is Extracellular. In terms of domain architecture, Sema spans 27 to 516 (KEALVKSEMN…TGKKITRIPL (490 aa)). N-linked (GlcNAc...) asparagine glycosylation occurs at Asn45. 4 disulfides stabilise this stretch: Cys95–Cys101, Cys98–Cys160, Cys133–Cys141, and Cys173–Cys176. Residue Asn106 is glycosylated (N-linked (GlcNAc...) asparagine). Residues Asn203 and Asn359 are each glycosylated (N-linked (GlcNAc...) asparagine). Cystine bridges form between Cys299–Cys364 and Cys386–Cys398. Residues Asn400 and Asn406 are each glycosylated (N-linked (GlcNAc...) asparagine). Intrachain disulfides connect Cys521–Cys539, Cys527–Cys562, Cys530–Cys546, and Cys542–Cys552. IPT/TIG domains follow at residues 564–656 (PAIY…FSYV), 658–740 (PIIT…FSYQ), and 743–837 (PIVY…LIYV). O-linked (Man) threonine glycosylation is present at Thr583. N-linked (GlcNAc...) asparagine glycosylation is found at Asn608 and Asn636. Residues Thr677 and Thr762 are each glycosylated (O-linked (Man) threonine). N-linked (GlcNAc...) asparagine glycans are attached at residues Asn786, Asn880, and Asn931. The helical transmembrane segment at 936–956 (IAGVISISTIVLLLLGLFLWL) threads the bilayer. Topologically, residues 957-1379 (KRKKQIKDLG…LSSQDNIDGE (423 aa)) are cytoplasmic. Position 967 is a phosphoserine (Ser967). Thr978 is subject to Phosphothreonine. Phosphoserine occurs at positions 991, 998, and 1001. The residue at position 1004 (Tyr1004) is a Phosphotyrosine. Residues 1079–1346 (VHFNEVIGRG…RISAIFSTFI (268 aa)) form the Protein kinase domain. ATP is bound by residues 1085-1093 (IGRGHFGCV) and Lys1111. Asp1205 functions as the Proton acceptor in the catalytic mechanism. Positions 1213–1382 (LDEKFTVKVA…QDNIDGEGDT (170 aa)) are interaction with RANBP9. Tyr1231 is modified (phosphotyrosine). 2 positions are modified to phosphotyrosine; by autocatalysis: Tyr1235 and Tyr1236. Position 1290 is a phosphothreonine (Thr1290). An interaction with MUC20 region spans residues 1321-1360 (WHPRAELRPSFSELVSRISAIFSTFIGEHYVHVNATYVNV). Phosphotyrosine; by autocatalysis occurs at positions 1350 and 1357. Tyr1366 carries the phosphotyrosine modification.

Belongs to the protein kinase superfamily. Tyr protein kinase family. As to quaternary structure, heterodimer made of an alpha chain (50 kDa) and a beta chain (145 kDa) which are disulfide linked. Binds PLXNB1. Interacts when phosphorylated with downstream effectors including STAT3, PIK3R1, SRC, PCLG1, GRB2 and GAB1. Interacts with SPSB1, SPSB2 and SPSB4. Interacts with INPP5D/SHIP1. When phosphorylated at Tyr-1357, interacts with INPPL1/SHIP2. Interacts with RANBP9 and RANBP10, as well as SPSB1, SPSB2, SPSB3 and SPSB4. SPSB1 binding occurs in the presence and in the absence of HGF, however HGF treatment has a positive effect on this interaction. Interacts with MUC20; prevents interaction with GRB2 and suppresses hepatocyte growth factor-induced cell proliferation. Interacts with GRB10. Interacts with PTPN1 and PTPN2. Interacts with HSP90AA1 and HSP90AB1; the interaction suppresses MET kinase activity. Interacts with tensin TNS3. Interacts (when phosphorylated) with tensin TNS4 (via SH2 domain); the interaction increases MET protein stability by inhibiting MET endocytosis and subsequent lysosomal degradation. (Microbial infection) Interacts with L.monocytogenes InlB. InlB probably dimerizes upon binding to MET, which encourages subsequent dimerization of MET. In terms of processing, autophosphorylated in response to ligand binding on Tyr-1235 and Tyr-1236 in the kinase domain leading to further phosphorylation of Tyr-1350 and Tyr-1357 in the C-terminal multifunctional docking site. Dephosphorylated by PTPRJ at Tyr-1350 and Tyr-1366. Dephosphorylated by PTPN1 and PTPN2. Ubiquitinated. Ubiquitination by CBL regulates the receptor stability and activity through proteasomal degradation. Post-translationally, (Microbial infection) Tyrosine phosphorylation is stimulated by L.monocytogenes InlB. In terms of processing, O-mannosylation of IPT/TIG domains by TMEM260 is required for protein maturation. O-mannosylated residues are composed of single mannose glycans that are not elongated or modified.

It is found in the membrane. The enzyme catalyses L-tyrosyl-[protein] + ATP = O-phospho-L-tyrosyl-[protein] + ADP + H(+). In its inactive state, the C-terminal tail interacts with the catalytic domain and inhibits the kinase activity. Upon ligand binding, the C-terminal tail is displaced and becomes phosphorylated, thus increasing the kinase activity. In terms of biological role, receptor tyrosine kinase that transduces signals from the extracellular matrix into the cytoplasm by binding to hepatocyte growth factor/HGF ligand. Regulates many physiological processes including proliferation, scattering, morphogenesis and survival. Ligand binding at the cell surface induces autophosphorylation of MET on its intracellular domain that provides docking sites for downstream signaling molecules. Following activation by ligand, interacts with the PI3-kinase subunit PIK3R1, PLCG1, SRC, GRB2, STAT3 or the adapter GAB1. Recruitment of these downstream effectors by MET leads to the activation of several signaling cascades including the RAS-ERK, PI3 kinase-AKT, or PLCgamma-PKC. The RAS-ERK activation is associated with the morphogenetic effects while PI3K/AKT coordinates prosurvival effects. During embryonic development, MET signaling plays a role in gastrulation, development and migration of muscles and neuronal precursors, angiogenesis and kidney formation. In adults, participates in wound healing as well as organ regeneration and tissue remodeling. Also promotes differentiation and proliferation of hematopoietic cells. Its function is as follows. (Microbial infection) Acts as a receptor for Listeria monocytogenes internalin InlB, mediating entry of the pathogen into cells. The sequence is that of Hepatocyte growth factor receptor (MET) from Canis lupus familiaris (Dog).